The chain runs to 265 residues: Ribosomal RNA small subunit methyltransferase A (265 aa).

The S-adenosyl-L-methionine site is built by histidine 13, leucine 15, glycine 40, glutamate 62, aspartate 87, and asparagine 106.

It belongs to the class I-like SAM-binding methyltransferase superfamily. rRNA adenine N(6)-methyltransferase family. RsmA subfamily.

It localises to the cytoplasm. The enzyme catalyses adenosine(1518)/adenosine(1519) in 16S rRNA + 4 S-adenosyl-L-methionine = N(6)-dimethyladenosine(1518)/N(6)-dimethyladenosine(1519) in 16S rRNA + 4 S-adenosyl-L-homocysteine + 4 H(+). Its function is as follows. Specifically dimethylates two adjacent adenosines (A1518 and A1519) in the loop of a conserved hairpin near the 3'-end of 16S rRNA in the 30S particle. May play a critical role in biogenesis of 30S subunits. This Persephonella marina (strain DSM 14350 / EX-H1) protein is Ribosomal RNA small subunit methyltransferase A.